The chain runs to 481 residues: uncharacterized protein (481 aa).

Transmembrane regions (helical) follow at residues L14–L34, F46–A66, I90–A110, F134–F154, T167–T187, F218–I238, I258–G278, I303–A323, L377–A397, A411–S431, and Y446–H466.

This sequence belongs to the amino acid-polyamine-organocation (APC) superfamily.

The protein localises to the cell membrane. Probable amino-acid or metabolite transport protein. This is an uncharacterized protein from Mycobacterium bovis (strain ATCC BAA-935 / AF2122/97).